The following is a 38-amino-acid chain: Photosystem II reaction center protein L (38 aa).

The helical transmembrane segment at Gly17–Phe37 threads the bilayer.

This sequence belongs to the PsbL family. As to quaternary structure, PSII is composed of 1 copy each of membrane proteins PsbA, PsbB, PsbC, PsbD, PsbE, PsbF, PsbH, PsbI, PsbJ, PsbK, PsbL, PsbM, PsbT, PsbX, PsbY, PsbZ, Psb30/Ycf12, at least 3 peripheral proteins of the oxygen-evolving complex and a large number of cofactors. It forms dimeric complexes.

The protein resides in the plastid. Its subcellular location is the chloroplast thylakoid membrane. Its function is as follows. One of the components of the core complex of photosystem II (PSII). PSII is a light-driven water:plastoquinone oxidoreductase that uses light energy to abstract electrons from H(2)O, generating O(2) and a proton gradient subsequently used for ATP formation. It consists of a core antenna complex that captures photons, and an electron transfer chain that converts photonic excitation into a charge separation. This subunit is found at the monomer-monomer interface and is required for correct PSII assembly and/or dimerization. This is Photosystem II reaction center protein L from Staurastrum punctulatum (Green alga).